We begin with the raw amino-acid sequence, 736 residues long: MEEGSKENCGFNGSPMGSRSPPKQLTSAASVLGEIQIAAANLKTPTKPQERNNADPWTPTANLKMLISAASPEIRNREREILEEQFSGDELEKTLPSRKEKSLGLLCHKFLARYPSYPNPAVNNSICLDEVAGELSVERRRIYDIVNVLESLHMVSRLAKNKYIWHGRLNLSKTFDALKKVGEENRYGEQIQLLRKREQEECDSQNSPNAETQKPLAKQPEVGFVELPGLEFRAASVNSRKEKSLRVMSQRFVMLFLVSDPQIVSLEVAAKILIGEDQLEDLDKSKFKTKIRRLYDIANVLTSLNLIKKVHVTEEKGRKPAFQWTCPELCTDDQENRSSPAALTPVAIDLSSPKENCAKNLFASGGKTFTRHPSLIKLAKSIENDRRKINSAPSSPIKSGDGSSSAASKMAQLAAICKQQLQQSRDQTKVKLKVSACKAKSTVKQPGGSDKNQTPTYCRAIPLLHPHPSAAPPYTVIVQPPQEQTLSRQSPPALGYTNRTPPEAPLQGGRHEGDGTSHSEDHSAQERHPKRLPESDRGCTSKRMKSSAVDDVTETLYPSGYLIPIHLAPVAPEPSKENTGPSSENKLFTSPIPGVFPLKLMFSPGPVTAVPVMSRGGQHVGGGSGSASRSPSPGMFTFALQNRELISAGLPQGATVSPRNGRGQEELSAASVLNCKHVSPVPYHGQPFTVFALQQSAVPVTPKGYHSLQETFFRTPGGMGCSPPESARKLDVGTDD.

Residues 1 to 26 (MEEGSKENCGFNGSPMGSRSPPKQLT) are disordered. Residues 15-26 (PMGSRSPPKQLT) show a composition bias toward polar residues. 2 consecutive DNA-binding regions follow at residues 98–167 (RKEK…IWHG) and 240–326 (RKEK…QWTC). Disordered regions lie at residues 386-405 (RRKI…GSSS), 435-456 (SACK…QTPT), 483-551 (EQTL…AVDD), and 716-736 (PGGM…GTDD). The segment covering 393–405 (PSSPIKSGDGSSS) has biased composition (low complexity). Basic and acidic residues-rich tracts occupy residues 509–539 (GRHE…DRGC) and 726–736 (SARKLDVGTDD).

This sequence belongs to the E2F/DP family. In terms of assembly, homodimer and heterodimer: mainly forms homodimers and, to a lesser extent, heterodimers with e2f7.

The protein resides in the nucleus. In terms of biological role, atypical E2F transcription factor that participates in various processes such as angiogenesis and polyploidization of specialized cells. Mainly acts as a transcription repressor that binds DNA independently of DP proteins and specifically recognizes the E2 recognition site 5'-TTTC[CG]CGC-3'. Directly represses transcription of classical E2F transcription factors such as e2f1. Acts as a regulator of S-phase by recognizing and binding the E2-related site 5'-TTCCCGCC-3' and mediating repression of G1/S-regulated genes. Acts as a promoter of sprouting angiogenesis, possibly by acting as a transcription activator. This Xenopus tropicalis (Western clawed frog) protein is Transcription factor E2F8 (e2f8).